A 285-amino-acid polypeptide reads, in one-letter code: Glutamate racemase (285 aa).

Residues D28–S29 and Y60–G61 contribute to the substrate site. The active-site Proton donor/acceptor is C92. Substrate is bound at residue N93–T94. The active-site Proton donor/acceptor is the C204. T205–H206 provides a ligand contact to substrate.

This sequence belongs to the aspartate/glutamate racemases family.

It catalyses the reaction L-glutamate = D-glutamate. It functions in the pathway cell wall biogenesis; peptidoglycan biosynthesis. Its function is as follows. Provides the (R)-glutamate required for cell wall biosynthesis. This is Glutamate racemase from Shigella flexneri serotype 5b (strain 8401).